Consider the following 340-residue polypeptide: Organic solute transporter subunit alpha (340 aa).

The Extracellular segment spans residues 1–48 (MEPGRTHIKLDPRYTAELLELLETNYSISPACFSHPPTAAQLLRALGP). Asn-25 carries an N-linked (GlcNAc...) asparagine glycan. A helical membrane pass occupies residues 49-69 (VDIALTIILTFLTTGSVAIFL). Residues 70–87 (EDAVYLYKNTLCPIKKRT) are Cytoplasmic-facing. The helical transmembrane segment at 88-108 (LIWSSSAPTVVSVFCCFGLWI) threads the bilayer. Residues 109 to 114 (PRALTL) are Extracellular-facing. The chain crosses the membrane as a helical span at residues 115–135 (VEMAITSFYAVCFYLLMMVMV). The Cytoplasmic segment spans residues 136–181 (EGFGGKKAVLRTLKDTPMRVHTGPCCCCCPCCPPLILTRKKLQLLL). Residues 182-202 (LGPFQYAFFKITLSIVGLFLI) traverse the membrane as a helical segment. Over 203-219 (PDGIYDPGEISEKSAAL) the chain is Extracellular. Residues 220–240 (WINNLLAVSTLLALWSLAILF) form a helical membrane-spanning segment. Residues 241–255 (RQAKMHLGEQNMGSK) are Cytoplasmic-facing. Residues 256-276 (FALFQVLVILTALQPAIFSIL) traverse the membrane as a helical segment. Residues 277–297 (ANSGQIACSPPYSSKIRSQVM) lie on the Extracellular side of the membrane. Residues 298–317 (NCHMLILETFLMTVLTRMYY) form a helical membrane-spanning segment. The Cytoplasmic portion of the chain corresponds to 318–340 (RRKDDKVGYEACSLPDLDSALKA). A Phosphoserine modification is found at Ser-330.

This sequence belongs to the OST-alpha family. Interacts with SLC51B. The Ost-alpha/Ost-beta complex is a heterodimer composed of alpha (SLC51A) and beta (SLC51B) subunit. In terms of processing, N-glycosylated. As to expression, present at high levels in ileum. In ileum, it is restricted to the apical domain on the mature villus enterocytes with little detectable expression in the goblet cells or crypt enterocytes (at protein level). Expressed in kidney but not in heart, brain, liver, spleen, embryo, lung, thymus, ovary nor testis.

The protein resides in the cell membrane. It localises to the endoplasmic reticulum membrane. It carries out the reaction taurocholate(out) = taurocholate(in). The enzyme catalyses tauroursodeoxycholate(out) = tauroursodeoxycholate(in). It catalyses the reaction glycoursodeoxycholate(out) = glycoursodeoxycholate(in). The catalysed reaction is glycocholate(out) = glycocholate(in). It carries out the reaction taurochenodeoxycholate(out) = taurochenodeoxycholate(in). The enzyme catalyses glycochenodeoxycholate(out) = glycochenodeoxycholate(in). It catalyses the reaction taurodeoxycholate(out) = taurodeoxycholate(in). The catalysed reaction is glycodeoxycholate(out) = glycodeoxycholate(in). It carries out the reaction prostaglandin E2(out) = prostaglandin E2(in). The enzyme catalyses estrone 3-sulfate(out) = estrone 3-sulfate(in). It catalyses the reaction dehydroepiandrosterone 3-sulfate(out) = dehydroepiandrosterone 3-sulfate(in). In terms of biological role, essential component of the Ost-alpha/Ost-beta complex, a heterodimer that acts as the intestinal basolateral transporter responsible for bile acid export from enterocytes into portal blood. Efficiently transports the major species of bile acids (taurocholate). Taurine conjugates are transported more efficiently across the basolateral membrane than glycine-conjugated bile acids. Can also transport steroids such as estrone 3-sulfate and dehydroepiandrosterone 3-sulfate, therefore playing a role in the enterohepatic circulation of sterols. Able to transport eicosanoids such as prostaglandin E2. In Mus musculus (Mouse), this protein is Organic solute transporter subunit alpha (Slc51a).